The sequence spans 423 residues: Gamma-glutamyl phosphate reductase (423 aa).

This sequence belongs to the gamma-glutamyl phosphate reductase family.

It is found in the cytoplasm. The catalysed reaction is L-glutamate 5-semialdehyde + phosphate + NADP(+) = L-glutamyl 5-phosphate + NADPH + H(+). It participates in amino-acid biosynthesis; L-proline biosynthesis; L-glutamate 5-semialdehyde from L-glutamate: step 2/2. Functionally, catalyzes the NADPH-dependent reduction of L-glutamate 5-phosphate into L-glutamate 5-semialdehyde and phosphate. The product spontaneously undergoes cyclization to form 1-pyrroline-5-carboxylate. The protein is Gamma-glutamyl phosphate reductase of Paraburkholderia phymatum (strain DSM 17167 / CIP 108236 / LMG 21445 / STM815) (Burkholderia phymatum).